A 213-amino-acid chain; its full sequence is Protein arginine N-methyltransferase SFM1 (213 aa).

A phosphoserine mark is found at Ser204 and Ser207.

This sequence belongs to the class IV-like SAM-binding methyltransferase superfamily. Protein arginine N-methyltransferase SFM1 family.

The protein localises to the cytoplasm. In terms of biological role, S-adenosyl-L-methionine-dependent protein-arginine N-methyltransferase that monomethylates ribosomal protein S3 (RPS3) at 'Arg-146'. The sequence is that of Protein arginine N-methyltransferase SFM1 from Saccharomyces cerevisiae (strain ATCC 204508 / S288c) (Baker's yeast).